We begin with the raw amino-acid sequence, 37 residues long: MIEPLLFGIVLGLIPVTLTGLFVAAYLQYRRGNQFGL.

The helical transmembrane segment at 5–25 (LLFGIVLGLIPVTLTGLFVAA) threads the bilayer.

It belongs to the PetG family. As to quaternary structure, the 4 large subunits of the cytochrome b6-f complex are cytochrome b6, subunit IV (17 kDa polypeptide, PetD), cytochrome f and the Rieske protein, while the 4 small subunits are PetG, PetL, PetM and PetN. The complex functions as a dimer.

It is found in the plastid. The protein resides in the chloroplast thylakoid membrane. Its function is as follows. Component of the cytochrome b6-f complex, which mediates electron transfer between photosystem II (PSII) and photosystem I (PSI), cyclic electron flow around PSI, and state transitions. PetG is required for either the stability or assembly of the cytochrome b6-f complex. This chain is Cytochrome b6-f complex subunit 5, found in Guillardia theta (Cryptophyte).